The sequence spans 279 residues: Methyltransferase ausD (279 aa).

S-adenosyl-L-methionine is bound by residues 124 to 125 (DI) and 152 to 153 (DV).

This sequence belongs to the class I-like SAM-binding methyltransferase superfamily. Homodimer.

Its pathway is secondary metabolite biosynthesis; terpenoid biosynthesis. In terms of biological role, methyltransferase; part of the gene cluster A that mediates the biosynthesis of the fungal meroterpenoid acetoxydehydroaustin. The first step of the pathway is the synthesis of 3,5-dimethylorsellinic acid by the polyketide synthase ausA. 3,5-dimethylorsellinic acid is then prenylated by the polyprenyl transferase ausN. Further epoxidation by the FAD-dependent monooxygenase ausM and cyclization by the probable terpene cyclase ausL lead to the formation of protoaustinoid A. Protoaustinoid A is then oxidized to spiro-lactone preaustinoid A3 by the combined action of the FAD-binding monooxygenases ausB and ausC, and the dioxygenase ausE. Acid-catalyzed keto-rearrangement and ring contraction of the tetraketide portion of preaustinoid A3 by ausJ lead to the formation of preaustinoid A4. The aldo-keto reductase ausK, with the help of ausH, is involved in the next step by transforming preaustinoid A4 into isoaustinone which is in turn hydroxylated by the P450 monooxygenase ausI to form austinolide. The cytochrome P450 monooxygenase ausG then modifies austinolide to austinol. Austinol is further acetylated to austin by the O-acetyltransferase ausP, which spontaneously changes to dehydroaustin. The cytochrome P450 monooxygenase then converts dehydroaustin is into 7-dehydrodehydroaustin. The hydroxylation catalyzed by ausR permits the second O-acetyltransferase ausQ to add an additional acetyl group to the molecule, leading to the formation of acetoxydehydroaustin. Due to genetic rearrangements of the clusters and the subsequent loss of some enzymes, the end product of the Penicillium brasilianum austinoid biosynthesis clusters is acetoxydehydroaustin. This chain is Methyltransferase ausD, found in Penicillium brasilianum.